Here is a 163-residue protein sequence, read N- to C-terminus: Cyanate hydratase (163 aa).

Residues Arg103, Glu106, and Ser129 contribute to the active site.

The protein belongs to the cyanase family.

It catalyses the reaction cyanate + hydrogencarbonate + 3 H(+) = NH4(+) + 2 CO2. In terms of biological role, catalyzes the reaction of cyanate with bicarbonate to produce ammonia and carbon dioxide. In Talaromyces stipitatus (strain ATCC 10500 / CBS 375.48 / QM 6759 / NRRL 1006) (Penicillium stipitatum), this protein is Cyanate hydratase.